A 95-amino-acid polypeptide reads, in one-letter code: Osteocalcin-related protein (95 aa).

An N-terminal signal peptide occupies residues Met1–Ala23. A propeptide spanning residues Thr24–Arg49 is cleaved from the precursor. Positions Arg46 to Gly92 constitute a Gla domain. Ca(2+)-binding residues include Glu62, Glu66, Glu69, and Asp75. 4-carboxyglutamate occurs at positions 66 and 69. Cysteines 68 and 74 form a disulfide.

Belongs to the osteocalcin/matrix Gla protein family. In terms of processing, gamma-carboxyglutamic acid residues are formed by vitamin K dependent carboxylation. These residues are essential for the binding of calcium. As to expression, expressed in kidney and lung, but not in bone.

The protein localises to the secreted. Its function is as follows. Binds strongly to apatite and calcium. This chain is Osteocalcin-related protein, found in Mus musculus (Mouse).